Reading from the N-terminus, the 958-residue chain is Structure-specific endonuclease subunit SLX4 (958 aa).

6 disordered regions span residues 89–123, 183–209, 326–400, 531–589, 594–613, and 655–849; these read AESP…KGKT, QKKA…GPID, LATA…LSPT, DLTI…EQHQ, QSNT…SFEL, and STAA…SPPA. The segment covering 109-121 has biased composition (basic residues); it reads KKPRTAGARKKKG. Over residues 332–341 the composition is skewed to basic and acidic residues; the sequence is RRPEEAERST. Polar residues predominate over residues 342–351; that stretch reads LSRQQDTHIP. The segment covering 364–373 has biased composition (low complexity); that stretch reads AASKSASAKP. Basic residues predominate over residues 374-389; the sequence is KAAKKAPKPRATKKKQ. The segment covering 600–610 has biased composition (pro residues); sequence QPQPAPPPPPS. Composition is skewed to low complexity over residues 655–666, 775–787, and 821–838; these read STAAQAAMSTSA, TTSP…RAKA, and PDSG…SSPD.

It belongs to the SLX4 family. Forms a heterodimer with SLX1. Phosphorylated in response to DNA damage.

The protein localises to the nucleus. Functionally, regulatory subunit of the SLX1-SLX4 structure-specific endonuclease that resolves DNA secondary structures generated during DNA repair and recombination. Has endonuclease activity towards branched DNA substrates, introducing single-strand cuts in duplex DNA close to junctions with ss-DNA. The chain is Structure-specific endonuclease subunit SLX4 from Chaetomium globosum (strain ATCC 6205 / CBS 148.51 / DSM 1962 / NBRC 6347 / NRRL 1970) (Soil fungus).